A 109-amino-acid chain; its full sequence is Large ribosomal subunit protein uL22 (109 aa).

This sequence belongs to the universal ribosomal protein uL22 family. In terms of assembly, part of the 50S ribosomal subunit.

Its function is as follows. This protein binds specifically to 23S rRNA; its binding is stimulated by other ribosomal proteins, e.g. L4, L17, and L20. It is important during the early stages of 50S assembly. It makes multiple contacts with different domains of the 23S rRNA in the assembled 50S subunit and ribosome. In terms of biological role, the globular domain of the protein is located near the polypeptide exit tunnel on the outside of the subunit, while an extended beta-hairpin is found that lines the wall of the exit tunnel in the center of the 70S ribosome. In Bordetella avium (strain 197N), this protein is Large ribosomal subunit protein uL22.